Reading from the N-terminus, the 79-residue chain is Small ribosomal subunit protein bS16c (79 aa).

It belongs to the bacterial ribosomal protein bS16 family.

The protein resides in the plastid. It is found in the chloroplast. The polypeptide is Small ribosomal subunit protein bS16c (Trieres chinensis (Marine centric diatom)).